A 100-amino-acid polypeptide reads, in one-letter code: Urease subunit gamma (100 aa).

It belongs to the urease gamma subunit family. In terms of assembly, heterotrimer of UreA (gamma), UreB (beta) and UreC (alpha) subunits. Three heterotrimers associate to form the active enzyme.

Its subcellular location is the cytoplasm. The enzyme catalyses urea + 2 H2O + H(+) = hydrogencarbonate + 2 NH4(+). Its pathway is nitrogen metabolism; urea degradation; CO(2) and NH(3) from urea (urease route): step 1/1. This Nostoc sp. (strain PCC 7120 / SAG 25.82 / UTEX 2576) protein is Urease subunit gamma.